We begin with the raw amino-acid sequence, 212 residues long: Peptide methionine sulfoxide reductase MsrA (212 aa).

Residues 1–14 show a composition bias toward polar residues; the sequence is MSSIDKTQRITQSD. The interval 1 to 21 is disordered; the sequence is MSSIDKTQRITQSDALPGRST. Residue Cys52 is part of the active site.

The protein belongs to the MsrA Met sulfoxide reductase family.

It carries out the reaction L-methionyl-[protein] + [thioredoxin]-disulfide + H2O = L-methionyl-(S)-S-oxide-[protein] + [thioredoxin]-dithiol. The enzyme catalyses [thioredoxin]-disulfide + L-methionine + H2O = L-methionine (S)-S-oxide + [thioredoxin]-dithiol. Its function is as follows. Has an important function as a repair enzyme for proteins that have been inactivated by oxidation. Catalyzes the reversible oxidation-reduction of methionine sulfoxide in proteins to methionine. This Pectobacterium carotovorum subsp. carotovorum (strain PC1) protein is Peptide methionine sulfoxide reductase MsrA.